The primary structure comprises 256 residues: uncharacterized protein (256 aa).

29 to 36 (GDDHSGKT) contributes to the ATP binding site.

This is an uncharacterized protein from Saccharomyces cerevisiae (strain ATCC 204508 / S288c) (Baker's yeast).